The sequence spans 153 residues: Ribosome maturation factor RimP (153 aa).

It belongs to the RimP family.

The protein localises to the cytoplasm. In terms of biological role, required for maturation of 30S ribosomal subunits. In Actinobacillus pleuropneumoniae serotype 5b (strain L20), this protein is Ribosome maturation factor RimP.